A 1378-amino-acid polypeptide reads, in one-letter code: DNA-directed RNA polymerase subunit beta (1378 aa).

Belongs to the RNA polymerase beta chain family. The RNAP catalytic core consists of 2 alpha, 1 beta, 1 beta' and 1 omega subunit. When a sigma factor is associated with the core the holoenzyme is formed, which can initiate transcription.

It catalyses the reaction RNA(n) + a ribonucleoside 5'-triphosphate = RNA(n+1) + diphosphate. Its function is as follows. DNA-dependent RNA polymerase catalyzes the transcription of DNA into RNA using the four ribonucleoside triphosphates as substrates. The sequence is that of DNA-directed RNA polymerase subunit beta from Campylobacter jejuni subsp. jejuni serotype O:23/36 (strain 81-176).